A 390-amino-acid chain; its full sequence is Succinate--CoA ligase [ADP-forming] subunit beta (390 aa).

One can recognise an ATP-grasp domain in the interval 9 to 248 (KDILRKFGVS…ISEEDPFEVE (240 aa)). ATP contacts are provided by residues Lys-50, 57–59 (GRG), Glu-103, Met-106, and Glu-111. Positions 203 and 217 each coordinate Mg(2+). Residues Asn-268 and 325–327 (GIV) contribute to the substrate site.

Belongs to the succinate/malate CoA ligase beta subunit family. As to quaternary structure, heterotetramer of two alpha and two beta subunits. Mg(2+) serves as cofactor.

It catalyses the reaction succinate + ATP + CoA = succinyl-CoA + ADP + phosphate. It carries out the reaction GTP + succinate + CoA = succinyl-CoA + GDP + phosphate. It functions in the pathway carbohydrate metabolism; tricarboxylic acid cycle; succinate from succinyl-CoA (ligase route): step 1/1. Succinyl-CoA synthetase functions in the citric acid cycle (TCA), coupling the hydrolysis of succinyl-CoA to the synthesis of either ATP or GTP and thus represents the only step of substrate-level phosphorylation in the TCA. The beta subunit provides nucleotide specificity of the enzyme and binds the substrate succinate, while the binding sites for coenzyme A and phosphate are found in the alpha subunit. The polypeptide is Succinate--CoA ligase [ADP-forming] subunit beta (Prosthecochloris aestuarii (strain DSM 271 / SK 413)).